The sequence spans 375 residues: Protein DEK (375 aa).

Residues 1–61 are disordered; it reads MSASAPAAEG…LIVEGKREKK (61 aa). At S2 the chain carries N-acetylserine. Phosphothreonine occurs at positions 13 and 15. S19 is subject to Phosphoserine. Over residues 19 to 30 the composition is skewed to basic and acidic residues; the sequence is SEKEPEMPGPRE. Residues 31-47 are compositionally biased toward acidic residues; it reads ESEEEEDEDDEEEEEEE. Position 32 is a phosphoserine; by CK2 (S32). Basic and acidic residues predominate over residues 48 to 61; sequence KEKSLIVEGKREKK. Phosphoserine is present on residues S51, S72, S121, and S122. Residues 149 to 183 enclose the SAP domain; the sequence is LKKFRNAMLKSICEVLDLERSGVNSELVKRILNFL. S159 is subject to Phosphoserine; by CK2. The tract at residues 184–325 is disordered; it reads MHPKPSGKPL…LKKPPTDEEL (142 aa). A compositionally biased stretch (basic residues) spans 194-203; sequence PKSKKTCSKG. At T199 the chain carries Phosphothreonine; by CK2. 2 positions are modified to phosphoserine; by CK2: S201 and S204. Positions 205–221 match the Nuclear localization signal motif; the sequence is KKERNSSGMARKAKRTK. 5 positions are modified to phosphoserine: S210, S227, S230, S231, and S232. Phosphoserine; by CK2 is present on residues S243, S244, and S251. Positions 243 to 253 are enriched in acidic residues; the sequence is SSDDEDKESEE. Basic residues predominate over residues 258–277; that stretch reads KTAKREKPKQKATSKSKKSV. Residues 278-296 are compositionally biased toward low complexity; sequence KSANVKKADSSTTKKNQNS. The residue at position 279 (S279) is an ADP-ribosylserine. 2 positions are modified to phosphoserine; by CK2: S287 and S288. A phosphothreonine; by CK2 mark is found at T289 and T290. 5 positions are modified to phosphoserine; by CK2: S296, S301, S303, S306, and S307. Residues 319 to 375 enclose the DEK-C domain; that stretch reads PPTDEELKETIKKLLASANLEEVTMKQICKKVYENYPTYDLTERKDFIKTTVKELIS. DNA-binding regions lie at residues 337-351 and 367-371; these read NLEE…KKVY and KTTVK.

Found in a mRNA splicing-dependent exon junction complex (EJC) with DEK, RBM8A, RNPS1, SRRM1 and ALYREF/THOC4. Interacts with histones H2A, H2B, H3, H4, acetylated histone H4, non-phosphorylated DAXX and HDAC2. Component of the B-WICH complex, at least composed of SMARCA5/SNF2H, BAZ1B/WSTF, SF3B1, DEK, MYO1C, ERCC6, MYBBP1A and DDX21. Binds DNA. Post-translationally, phosphorylated by CK2. Phosphorylation fluctuates during the cell cycle with a moderate peak during G(1) phase, and weakens the binding of DEK to DNA. As to expression, ubiquitous. Expressed at relatively high levels.

Its subcellular location is the nucleus. Involved in chromatin organization. The polypeptide is Protein DEK (DEK) (Homo sapiens (Human)).